The primary structure comprises 293 residues: SAGA-associated factor 29 (293 aa).

Residues 3–86 (LVSADSRIAE…LRKALDKIAE (84 aa)) are a coiled coil. The SGF29 C-terminal domain maps to 152–293 (GDYVAKPGDK…VVACKEPKKK (142 aa)). Histone H3K4me3 N-terminus binding stretches follow at residues 194–196 (DID) and 240–243 (QTTC). Residues 264–266 (FED) form a histone H3K4me3 binding region. Lysine 288 carries the post-translational modification N6-acetyllysine.

It belongs to the SGF29 family. Interacts with dimethylated and trimethylated 'Lys-4' of histone H3 (H3K4me2 and H3K4me3), with a preference for the trimethylated form (H3K4me3). Component of some SAGA-type complexes. Component of the ADA2A-containing complex (ATAC), composed of KAT14, KAT2A, TADA2L, TADA3L, ZZ3, MBIP, WDR5, YEATS2, CCDC101 and DR1. Interacts with (methylated) CGAS. Interacts with TADA3L, GCN5L2, SUPT3H and MYC.

It localises to the nucleus. Functionally, chromatin reader component of some histone acetyltransferase (HAT) SAGA-type complexes like the TFTC-HAT, ATAC or STAGA complexes. SGF29 specifically recognizes and binds methylated 'Lys-4' of histone H3 (H3K4me), with a preference for trimethylated form (H3K4me3). In the SAGA-type complexes, SGF29 is required to recruit complexes to H3K4me. Involved in the response to endoplasmic reticulum (ER) stress by recruiting the SAGA complex to H3K4me, thereby promoting histone H3 acetylation and cell survival. Also binds non-histone proteins that are methylated on Lys residues: specifically recognizes and binds CGAS monomethylated on 'Lys-491'. This Mus musculus (Mouse) protein is SAGA-associated factor 29.